The following is a 246-amino-acid chain: UL16-binding protein 2 (246 aa).

Residues 1-25 (MAAAAATKILLCLPLLLLLSGWSRA) form the signal peptide. Residues 29–117 (DPHSLCYDIT…IQLENYTPKE (89 aa)) form an MHC class I alpha-1 like region. A disulfide bridge links Cys-50 with Cys-66. N-linked (GlcNAc...) asparagine glycosylation is found at Asn-68 and Asn-82. The segment at 118–210 (PLTLQARMSC…MDSTLEPSAG (93 aa)) is MHC class I alpha-2 like. Cys-127 and Cys-190 are joined by a disulfide. Ser-216 is a binding site for a protein. The GPI-anchor amidated serine moiety is linked to residue Ser-217. A propeptide spans 218–246 (GTTQLRATATTLILCCLLIILPCFILPGI) (removed in mature form).

It belongs to the MHC class I family. As to quaternary structure, interacts with KLRK1/NKG2D. Does not bind to beta2-microglobulin. (Microbial infection) In CMV-infected cells, interacts with the viral glycoprotein UL16; this interaction causes ULBP2 retention in the endoplasmic reticulum and cis-Golgi and prevents binding to and activation of KLRK1/NKG2D, providing CMV with an immune evasion mechanism. As to expression, expressed in various types of cancer cell lines and in the fetus, but not in normal tissues.

It localises to the cell membrane. Its subcellular location is the endoplasmic reticulum. It is found in the secreted. Functionally, binds and activates the KLRK1/NKG2D receptor, mediating natural killer cell cytotoxicity. This is UL16-binding protein 2 from Homo sapiens (Human).